The following is a 101-amino-acid chain: MYISRNMEQWTKFIETLRIAFNDGKEQDLLTLLLTPDERDAIGLRLQIVAQLLDKKIPQREIQQNLNTSAATITRGSNMLKLMSPDFMEWVKKHTNETENT.

The DNA-binding element occupies 59-82 (QREIQQNLNTSAATITRGSNMLKL).

Belongs to the TrpR family. In terms of assembly, homodimer.

The protein localises to the cytoplasm. Functionally, this protein is an aporepressor. When complexed with L-tryptophan it binds the operator region of the trp operon and prevents the initiation of transcription. This is Trp operon repressor homolog from Mannheimia succiniciproducens (strain KCTC 0769BP / MBEL55E).